A 284-amino-acid polypeptide reads, in one-letter code: MKVFILALLALAATTAIAQLETTCSQGFGQSQQQQQPGQRQLLEQMKPCVAFLQQKCSPLRMPFLQTQVEQLSSCQIVQYQCCQQLAQIPERTRCHAIHIVVEAIIQQQSQQQWQEPQQQAQHKSMRMLLENLSLMCNIYVPVQCQQQQQLGQQQQQQLQEQLTPCTTFLQQQCSPVTVPFPQIPVDQPTSCQNVQYQCCRQLSQIPEQFRCQAIHNVAEAIRQQQPQQQWQGMYQPQQPAQLESIRMSLQALRSMCSIYIPVQCPAPTTYNIPLVATYTGGAC.

The signal sequence occupies residues 1 to 18 (MKVFILALLALAATTAIA).

This sequence belongs to the prolamin family. Contains disulfide bonds.

Seed storage protein. Might be integrated via inter-chain disulfide bonds within the glutenin polymer. The chain is Avenin-like b9 from Triticum aestivum (Wheat).